A 64-amino-acid chain; its full sequence is Large ribosomal subunit protein bL35 (64 aa).

The interval 1-55 (MPKMKTNKSVSARFKLTASGQLKRTRPGKRHKLSKKSSQEKRNLSKQPLVDKGQV) is disordered. The segment covering 23 to 35 (KRTRPGKRHKLSK) has biased composition (basic residues).

This sequence belongs to the bacterial ribosomal protein bL35 family.

In Chlamydia pneumoniae (Chlamydophila pneumoniae), this protein is Large ribosomal subunit protein bL35.